A 720-amino-acid chain; its full sequence is Mitogen-activated protein kinase 6 (720 aa).

Residue M1 forms a Peptide (Met-Gly) (interchain with G-Cter in ubiquitin) linkage. One can recognise a Protein kinase domain in the interval 20 to 316 (YMDLKPLGCG…AEEALSHPYM (297 aa)). Residues 26 to 34 (LGCGGNGLV) and K49 contribute to the ATP site. D152 acts as the Proton acceptor in catalysis. S189 is modified (phosphoserine; by PAK1, PAK2 and PAK3). The SEG motif signature appears at 189–191 (SEG). The FRIEDE motif motif lies at 332–337 (FHIEDE). S386, S452, S554, and S556 each carry phosphoserine. Positions 638 to 657 (SEMLETEPVEEGKRGERGRE) are disordered. A compositionally biased stretch (basic and acidic residues) spans 647 to 657 (EEGKRGERGRE). S683 carries the post-translational modification Phosphoserine. Residues 698 to 714 (PSAMKSSPQIPHKTYSN) are compositionally biased toward polar residues. Residues 698–720 (PSAMKSSPQIPHKTYSNILKHLN) are disordered.

Belongs to the protein kinase superfamily. CMGC Ser/Thr protein kinase family. MAP kinase subfamily. In terms of assembly, heterodimer with ERK4/MAPK4. Interacts with (via FRIEDE motif) MAPKAPK5. Interacts with UBE3A; this interaction may be indirect and mediated by HERC2, possibly via HERC2 interaction with NEURL4. The cofactor is Mg(2+). In terms of processing, phosphorylated at Ser-189 by PAK1, PAK2 and PAK3 resulting in catalytic activation. Phosphorylated by MAPKAPK5 at other sites. Ubiquitination at Met-1 leads to degradation by the proteasome pathway. In terms of tissue distribution, highest levels within the nervous system, expressed in different tissues, mostly in skeletal muscle.

It localises to the cytoplasm. It is found in the nucleus. It catalyses the reaction L-seryl-[protein] + ATP = O-phospho-L-seryl-[protein] + ADP + H(+). The catalysed reaction is L-threonyl-[protein] + ATP = O-phospho-L-threonyl-[protein] + ADP + H(+). With respect to regulation, activated by phosphorylation at Ser-189. Atypical MAPK protein. Phosphorylates microtubule-associated protein 2 (MAP2) and MAPKAPK5. The precise role of the complex formed with MAPKAPK5 is still unclear, but the complex follows a complex set of phosphorylation events: upon interaction with atypical MAPKAPK5, ERK3/MAPK6 is phosphorylated at Ser-189 and then mediates phosphorylation and activation of MAPKAPK5, which in turn phosphorylates ERK3/MAPK6. May promote entry in the cell cycle. The protein is Mitogen-activated protein kinase 6 (Mapk6) of Rattus norvegicus (Rat).